We begin with the raw amino-acid sequence, 219 residues long: MVRGKTEMKRIENATSRQVTFSKRRNGLLKKAFELSVLCDAEVALVIFSPRSKLYEFSSSSIAATIERYQRRIKEIGNNHKRNDNSQQARDETSGLTKKIEQLEISKRKLLGEGIDACSIEELQQLENQLDRSLSRIRAKKYQLLREEIEKLKAEERNLVKENKDLKEKWLGMGTATIASSQSTLSSSEVNIDDNMEVETGLFIGPPETRQSKKFPPQN.

An MADS-box domain is found at 1-61; sequence MVRGKTEMKR…SKLYEFSSSS (61 aa). Positions 77–96 are disordered; sequence GNNHKRNDNSQQARDETSGL. The K-box domain occupies 86-176; that stretch reads SQQARDETSG…KEKWLGMGTA (91 aa).

Interacts with SOC1 and AGL21. Mostly expressed in the outer layers of the root meristem (lateral root cap and epidermis) and in the central cylinder cells of mature roots. Also present in rosette leaves and seedlings and, to a lesser extent, in cauline leaves and flowers. Enriched in apices including the shoot apical meristem and developing leaf primordia.

The protein localises to the nucleus. In terms of biological role, probable transcription factor that promotes flowering, especially in response to vernalization by short periods of cold, in an FLC-inpedendent manner. This is Agamous-like MADS-box protein AGL19 (AGL19) from Arabidopsis thaliana (Mouse-ear cress).